The chain runs to 82 residues: Teratocyte protein CftICK-IV (82 aa).

The N-terminal stretch at 1-21 is a signal peptide; it reads MAKILLTFIILTCLIVTITPA.

Contains 4 disulfide bonds. As to expression, abundantly expressed by teratocytes, which are extra-embryonic cells released by parasitoid wasps into their hosts during larval eclosion.

The protein localises to the secreted. Functionally, this endoparasitoid wasp peptide has immununosuppressive and insecticidal activities. Suppress cellular immunity which is detectable as a reduction of hemocyte spread index in the host. In vivo, ingestion of this peptide moderately reduces leaf consumption of D.saccharalis, a permissive host for the lepidoptere C.flavipes. The polypeptide is Teratocyte protein CftICK-IV (Cotesia flavipes (Parasitic wasp)).